The following is a 235-amino-acid chain: Exotoxin type C (235 aa).

Residues 1–27 form the signal peptide; it reads MKKINIIKIVFIITVILISTISPIIKS. Residues histidine 194, histidine 228, and aspartate 230 each contribute to the Zn(2+) site.

This sequence belongs to the staphylococcal/streptococcal toxin family.

Functionally, superantigen that acts as a causative agent of the symptoms associated with scarlet fever. Has been associated with streptococcal toxic shock-like disease and may play a role in the early events of rheumatic fever. Superantigens cross-link major histocompatibility complex (MHC) class II and T-cell receptor (TCR) molecules, resulting in an overstimulation of T-cells associated with a massive release of pyrogenic and inflammatory cytokines. The polypeptide is Exotoxin type C (speC) (Streptococcus pyogenes serotype M1).